A 1435-amino-acid chain; its full sequence is Nitric oxide synthase 1 (1435 aa).

The segment at 1-206 (MEEHVFGVQQ…LQGSGDKNEL (206 aa)) is interaction with NOSIP. The PDZ domain maps to 17-99 (SVRLFKRKVG…ETHVVLILRG (83 aa)). 2 disordered regions span residues 110–201 (TFTG…QGSG) and 277–304 (NNPYSEKEQPPASGKQSPTKNGSPSKCP). Positions 164–246 (QGHGQEAGSP…TGVQVDRDFD (83 aa)) are interaction with DYNLL1/PIN. Residues 290-300 (GKQSPTKNGSP) show a composition bias toward polar residues. Ser340 contacts (6R)-L-erythro-5,6,7,8-tetrahydrobiopterin. Cys421 contacts heme b. Residues Gln484, Trp593, Tyr594, and Glu598 each coordinate L-arginine. (6R)-L-erythro-5,6,7,8-tetrahydrobiopterin contacts are provided by Val683, Trp684, and Phe697. Residue Tyr712 coordinates heme b. Positions 731 to 751 (KRRAIGFKKLAEAVKFSAKLM) are calmodulin-binding. Positions 761–941 (ATILYATETG…AFRTWAKKVF (181 aa)) constitute a Flavodoxin-like domain. Residues Thr767, Glu768, Thr769, Lys771, Ser772, Ser813, Thr814, and Gly818 each coordinate FMN. Ser853, Ser863, and Ser864 each carry phosphoserine. FMN-binding residues include Ser892, His897, Cys899, Glu925, and Gln929. The FAD-binding FR-type domain occupies 996–1243 (KRVSAARLLS…VRGAPSFRLP (248 aa)). Residue Arg1016 participates in NADP(+) binding. His1038, Arg1179, Tyr1180, Tyr1181, Ser1182, Thr1197, and Ala1199 together coordinate FAD. Ser1202 serves as a coordination point for NADP(+). FAD is bound by residues Tyr1203, Val1216, Cys1217, and Ser1218. NADP(+)-binding residues include Thr1257, Arg1290, Ser1319, Arg1320, Lys1326, Tyr1328, Gln1330, Asp1363, Thr1404, and Arg1406.

The protein belongs to the NOS family. As to quaternary structure, homodimer. Interacts with DLG4; the interaction possibly being prevented by the association between NOS1 and CAPON. Forms a ternary complex with CAPON and RASD1. Forms a ternary complex with CAPON and SYN1. Interacts with ZDHHC23. Interacts with NOSIP; which may impair its synaptic location. Interacts with HTR4. Interacts with SLC6A4. Interacts with VAC14. Interacts (via N-terminal domain) with DLG4 (via N-terminal tandem pair of PDZ domains). Interacts with SLC6A4. Forms a complex with ASL, ASS1 and SLC7A1; the complex regulates cell-autonomous L-arginine synthesis and citrulline recycling while channeling extracellular L-arginine to nitric oxide synthesis pathway. Interacts with DMD; localizes NOS1 to sarcolemma in muscle cells. Interacts with DYNLL1; inhibits the nitric oxide synthase activity. Heme b serves as cofactor. It depends on FAD as a cofactor. The cofactor is FMN. Requires (6R)-L-erythro-5,6,7,8-tetrahydrobiopterin as cofactor. In terms of processing, ubiquitinated; mediated by STUB1/CHIP in the presence of Hsp70 and Hsp40 (in vitro).

The protein localises to the cell membrane. The protein resides in the sarcolemma. Its subcellular location is the cell projection. It is found in the dendritic spine. It catalyses the reaction 2 L-arginine + 3 NADPH + 4 O2 + H(+) = 2 L-citrulline + 2 nitric oxide + 3 NADP(+) + 4 H2O. With respect to regulation, stimulated by calcium/calmodulin. Inhibited by DYNLL1 that prevents the dimerization of the protein. Inhibited by NOSIP. In terms of biological role, produces nitric oxide (NO) which is a messenger molecule with diverse functions throughout the body. In the brain and peripheral nervous system, NO displays many properties of a neurotransmitter. Probably has nitrosylase activity and mediates cysteine S-nitrosylation of cytoplasmic target proteins such SRR. The chain is Nitric oxide synthase 1 (NOS1) from Oryctolagus cuniculus (Rabbit).